The primary structure comprises 274 residues: ATP synthase subunit b 2 (274 aa).

The helical transmembrane segment at 2 to 22 (HIDWFVLLAQLVNFLILIYLL) threads the bilayer.

Belongs to the ATPase B chain family. F-type ATPases have 2 components, F(1) - the catalytic core - and F(0) - the membrane proton channel. F(1) has five subunits: alpha(3), beta(3), gamma(1), delta(1), epsilon(1). F(0) has three main subunits: a(1), b(2) and c(10-14). The alpha and beta chains form an alternating ring which encloses part of the gamma chain. F(1) is attached to F(0) by a central stalk formed by the gamma and epsilon chains, while a peripheral stalk is formed by the delta and b chains.

The protein localises to the cell inner membrane. F(1)F(0) ATP synthase produces ATP from ADP in the presence of a proton or sodium gradient. F-type ATPases consist of two structural domains, F(1) containing the extramembraneous catalytic core and F(0) containing the membrane proton channel, linked together by a central stalk and a peripheral stalk. During catalysis, ATP synthesis in the catalytic domain of F(1) is coupled via a rotary mechanism of the central stalk subunits to proton translocation. Its function is as follows. Component of the F(0) channel, it forms part of the peripheral stalk, linking F(1) to F(0). The chain is ATP synthase subunit b 2 from Syntrophus aciditrophicus (strain SB).